The chain runs to 369 residues: RING-H2 finger protein ATL47 (369 aa).

The helical transmembrane segment at 52–72 (IILFIIVLLSVIFFICSILHL) threads the bilayer. The RING-type; atypical zinc-finger motif lies at 144-186 (CAVCLCEFSEDDKLRLLPNCSHAFHIDCIDTWLLSNSTCPLCR). Positions 332-355 (NNHPSETNLVVGGSSSSSSYVCSG) are disordered. Residues 341 to 355 (VVGGSSSSSSYVCSG) are compositionally biased toward low complexity.

It belongs to the RING-type zinc finger family. ATL subfamily.

It localises to the membrane. The enzyme catalyses S-ubiquitinyl-[E2 ubiquitin-conjugating enzyme]-L-cysteine + [acceptor protein]-L-lysine = [E2 ubiquitin-conjugating enzyme]-L-cysteine + N(6)-ubiquitinyl-[acceptor protein]-L-lysine.. Its pathway is protein modification; protein ubiquitination. The chain is RING-H2 finger protein ATL47 (ATL47) from Arabidopsis thaliana (Mouse-ear cress).